The primary structure comprises 317 residues: Beta-ketoacyl-[acyl-carrier-protein] synthase III (317 aa).

Active-site residues include C112 and H244. An ACP-binding region spans residues 245–249 (QANLR). The active site involves N274.

This sequence belongs to the thiolase-like superfamily. FabH family. In terms of assembly, homodimer.

Its subcellular location is the cytoplasm. The enzyme catalyses malonyl-[ACP] + acetyl-CoA + H(+) = 3-oxobutanoyl-[ACP] + CO2 + CoA. It participates in lipid metabolism; fatty acid biosynthesis. Functionally, catalyzes the condensation reaction of fatty acid synthesis by the addition to an acyl acceptor of two carbons from malonyl-ACP. Catalyzes the first condensation reaction which initiates fatty acid synthesis and may therefore play a role in governing the total rate of fatty acid production. Possesses both acetoacetyl-ACP synthase and acetyl transacylase activities. Its substrate specificity determines the biosynthesis of branched-chain and/or straight-chain of fatty acids. This Blochmanniella pennsylvanica (strain BPEN) protein is Beta-ketoacyl-[acyl-carrier-protein] synthase III.